A 638-amino-acid chain; its full sequence is 1-deoxy-D-xylulose-5-phosphate synthase (638 aa).

Residues His-75 and 116 to 118 each bind thiamine diphosphate; that span reads AHS. Residue Asp-147 participates in Mg(2+) binding. Thiamine diphosphate contacts are provided by residues 148 to 149, Asn-177, Tyr-288, and Glu-370; that span reads GA. Asn-177 serves as a coordination point for Mg(2+).

Belongs to the transketolase family. DXPS subfamily. As to quaternary structure, homodimer. Mg(2+) serves as cofactor. Requires thiamine diphosphate as cofactor.

It catalyses the reaction D-glyceraldehyde 3-phosphate + pyruvate + H(+) = 1-deoxy-D-xylulose 5-phosphate + CO2. It functions in the pathway metabolic intermediate biosynthesis; 1-deoxy-D-xylulose 5-phosphate biosynthesis; 1-deoxy-D-xylulose 5-phosphate from D-glyceraldehyde 3-phosphate and pyruvate: step 1/1. Catalyzes the acyloin condensation reaction between C atoms 2 and 3 of pyruvate and glyceraldehyde 3-phosphate to yield 1-deoxy-D-xylulose-5-phosphate (DXP). This is 1-deoxy-D-xylulose-5-phosphate synthase from Cupriavidus taiwanensis (strain DSM 17343 / BCRC 17206 / CCUG 44338 / CIP 107171 / LMG 19424 / R1) (Ralstonia taiwanensis (strain LMG 19424)).